The chain runs to 434 residues: Tryptophan--tRNA ligase (434 aa).

Residues 14–16 (TTS) and 22–23 (GN) contribute to the ATP site. A 'HIGH' region motif is present at residues 15–23 (TSGTPHLGN). Residue Asp-147 coordinates L-tryptophan. Residues 159–161 (GRD), Leu-199, and 206–210 (KMSKS) each bind ATP. Positions 206-210 (KMSKS) match the 'KMSKS' region motif.

The protein belongs to the class-I aminoacyl-tRNA synthetase family. Homodimer.

The protein localises to the cytoplasm. It carries out the reaction tRNA(Trp) + L-tryptophan + ATP = L-tryptophyl-tRNA(Trp) + AMP + diphosphate + H(+). Functionally, catalyzes the attachment of tryptophan to tRNA(Trp). This chain is Tryptophan--tRNA ligase, found in Xylella fastidiosa (strain 9a5c).